A 101-amino-acid polypeptide reads, in one-letter code: Protein S100-A3 (101 aa).

Ala2 is modified (N-acetylalanine). 2 consecutive EF-hand domains span residues Ile12–Pro47 and Phe50–Tyr85. Positions 28 and 33 each coordinate Ca(2+). The cysteines at positions 30 and 68 are disulfide-linked. Position 51 is a citrulline; by PAD3 (Arg51). Ca(2+) is bound by residues Asp63, Asn65, Asp67, Glu69, and Glu74. The cysteines at positions 81 and 99 are disulfide-linked. Residues Cys83, Cys86, His87, and Cys93 each contribute to the Zn(2+) site.

The protein belongs to the S-100 family. As to quaternary structure, homodimer and homotetramer for the citrullinated form. More than half of the arginine residues undergo citrullination by PAD1 and PAD2. Arg-51 is specifically citrullinated by PAD3 and promotes tetramerization. As to expression, skin specific, specifically expressed at the inner endocuticle of hair fibers.

It localises to the cytoplasm. Its function is as follows. Binds both calcium and zinc. May be involved in calcium-dependent cuticle cell differentiation, hair shaft and hair cuticular barrier formation. In Homo sapiens (Human), this protein is Protein S100-A3 (S100A3).